We begin with the raw amino-acid sequence, 86 residues long: MKPEEVIIRVYVTEKTTRMLEEENTLTFIVRREATKNDVKRAVEQLFGVKVEKVRTLITPRGYKKAYVKLAPEYKALDVATKLGAV.

It belongs to the universal ribosomal protein uL23 family. In terms of assembly, part of the 50S ribosomal subunit. Contacts protein L29.

Binds to 23S rRNA. One of the proteins that surrounds the polypeptide exit tunnel on the outside of the ribosome. The chain is Large ribosomal subunit protein uL23 from Aeropyrum pernix (strain ATCC 700893 / DSM 11879 / JCM 9820 / NBRC 100138 / K1).